The following is a 362-amino-acid chain: Probable protein phosphatase 2C 11 (362 aa).

Positions 23–329 (KLGLSSMQGW…DNMTMVLVQF (307 aa)) constitute a PPM-type phosphatase domain. Positions 57, 58, 272, and 320 each coordinate Mn(2+).

This sequence belongs to the PP2C family. Mg(2+) serves as cofactor. It depends on Mn(2+) as a cofactor.

The enzyme catalyses O-phospho-L-seryl-[protein] + H2O = L-seryl-[protein] + phosphate. The catalysed reaction is O-phospho-L-threonyl-[protein] + H2O = L-threonyl-[protein] + phosphate. The sequence is that of Probable protein phosphatase 2C 11 from Oryza sativa subsp. japonica (Rice).